A 70-amino-acid polypeptide reads, in one-letter code: Large ribosomal subunit protein bL31 (70 aa).

K8 is subject to N6-acetyllysine. Zn(2+) contacts are provided by C16, C18, C37, and C40.

Belongs to the bacterial ribosomal protein bL31 family. Type A subfamily. In terms of assembly, part of the 50S ribosomal subunit. Zn(2+) serves as cofactor.

Binds the 23S rRNA. The sequence is that of Large ribosomal subunit protein bL31 from Shigella flexneri.